The primary structure comprises 432 residues: Adenosylhomocysteinase (432 aa).

Residue Ser2 is modified to N-acetylserine. 3 residues coordinate substrate: Thr57, Asp131, and Glu156. Residue 157–159 (TTT) participates in NAD(+) binding. At Ser183 the chain carries Phosphoserine. Residues Lys186 and Asp190 each contribute to the substrate site. Lys186 carries the post-translational modification N6-(2-hydroxyisobutyryl)lysine. Tyr193 is subject to Phosphotyrosine. Residues 222–227 (GDVGKG), Glu243, Asn248, 299–301 (IGH), Asn346, and His353 each bind NAD(+).

Belongs to the adenosylhomocysteinase family. As to quaternary structure, homotetramer. Interaction with AHCYL1. It depends on NAD(+) as a cofactor.

It is found in the cytoplasm. The protein resides in the melanosome. The protein localises to the nucleus. Its subcellular location is the endoplasmic reticulum. It carries out the reaction S-adenosyl-L-homocysteine + H2O = L-homocysteine + adenosine. The protein operates within amino-acid biosynthesis; L-homocysteine biosynthesis; L-homocysteine from S-adenosyl-L-homocysteine: step 1/1. In terms of biological role, catalyzes the hydrolysis of S-adenosyl-L-homocysteine to form adenosine and homocysteine. Binds copper ions. The chain is Adenosylhomocysteinase (AHCY) from Homo sapiens (Human).